The sequence spans 456 residues: ATP synthase subunit beta 1 (456 aa).

152–159 (GGAGVGKS) contacts ATP.

Belongs to the ATPase alpha/beta chains family. F-type ATPases have 2 components, CF(1) - the catalytic core - and CF(0) - the membrane proton channel. CF(1) has five subunits: alpha(3), beta(3), gamma(1), delta(1), epsilon(1). CF(0) has three main subunits: a(1), b(2) and c(9-12). The alpha and beta chains form an alternating ring which encloses part of the gamma chain. CF(1) is attached to CF(0) by a central stalk formed by the gamma and epsilon chains, while a peripheral stalk is formed by the delta and b chains.

It localises to the cell membrane. It catalyses the reaction ATP + H2O + 4 H(+)(in) = ADP + phosphate + 5 H(+)(out). Produces ATP from ADP in the presence of a proton gradient across the membrane. The catalytic sites are hosted primarily by the beta subunits. This chain is ATP synthase subunit beta 1, found in Listeria welshimeri serovar 6b (strain ATCC 35897 / DSM 20650 / CCUG 15529 / CIP 8149 / NCTC 11857 / SLCC 5334 / V8).